The following is a 449-amino-acid chain: UDP-N-acetylmuramoylalanine--D-glutamate ligase (449 aa).

An ATP-binding site is contributed by 118–124; that stretch reads GTNGKTT.

The protein belongs to the MurCDEF family.

It is found in the cytoplasm. The catalysed reaction is UDP-N-acetyl-alpha-D-muramoyl-L-alanine + D-glutamate + ATP = UDP-N-acetyl-alpha-D-muramoyl-L-alanyl-D-glutamate + ADP + phosphate + H(+). It participates in cell wall biogenesis; peptidoglycan biosynthesis. Cell wall formation. Catalyzes the addition of glutamate to the nucleotide precursor UDP-N-acetylmuramoyl-L-alanine (UMA). In Staphylococcus haemolyticus (strain JCSC1435), this protein is UDP-N-acetylmuramoylalanine--D-glutamate ligase.